The following is a 907-amino-acid chain: Protein translocase subunit SecA (907 aa).

ATP-binding positions include Gln-87, 105 to 109, and Asp-512; that span reads GEGKT. Residues Cys-891, Cys-893, Cys-902, and His-903 each coordinate Zn(2+).

It belongs to the SecA family. As to quaternary structure, monomer and homodimer. Part of the essential Sec protein translocation apparatus which comprises SecA, SecYEG and auxiliary proteins SecDF-YajC and YidC. Zn(2+) is required as a cofactor.

The protein localises to the cell inner membrane. The protein resides in the cytoplasm. The enzyme catalyses ATP + H2O + cellular proteinSide 1 = ADP + phosphate + cellular proteinSide 2.. In terms of biological role, part of the Sec protein translocase complex. Interacts with the SecYEG preprotein conducting channel. Has a central role in coupling the hydrolysis of ATP to the transfer of proteins into and across the cell membrane, serving both as a receptor for the preprotein-SecB complex and as an ATP-driven molecular motor driving the stepwise translocation of polypeptide chains across the membrane. The polypeptide is Protein translocase subunit SecA (Tolumonas auensis (strain DSM 9187 / NBRC 110442 / TA 4)).